Here is a 345-residue protein sequence, read N- to C-terminus: Ferrochelatase (345 aa).

Positions 199 and 302 each coordinate Fe cation.

Belongs to the ferrochelatase family.

It localises to the cytoplasm. It carries out the reaction heme b + 2 H(+) = protoporphyrin IX + Fe(2+). It participates in porphyrin-containing compound metabolism; protoheme biosynthesis; protoheme from protoporphyrin-IX: step 1/1. Functionally, catalyzes the ferrous insertion into protoporphyrin IX. This is Ferrochelatase from Porphyromonas gingivalis (strain ATCC 33277 / DSM 20709 / CIP 103683 / JCM 12257 / NCTC 11834 / 2561).